Consider the following 242-residue polypeptide: Orotidine 5'-phosphate decarboxylase (242 aa).

Substrate-binding positions include Asp16, Lys37, 64 to 73 (DLKFHDIPNT), Thr128, Arg190, Gln199, Gly219, and Arg220. Lys66 functions as the Proton donor in the catalytic mechanism.

This sequence belongs to the OMP decarboxylase family. Type 1 subfamily. As to quaternary structure, homodimer.

The catalysed reaction is orotidine 5'-phosphate + H(+) = UMP + CO2. Its pathway is pyrimidine metabolism; UMP biosynthesis via de novo pathway; UMP from orotate: step 2/2. Its function is as follows. Catalyzes the decarboxylation of orotidine 5'-monophosphate (OMP) to uridine 5'-monophosphate (UMP). This is Orotidine 5'-phosphate decarboxylase from Prochlorococcus marinus (strain MIT 9312).